We begin with the raw amino-acid sequence, 126 residues long: Fluoride-specific ion channel FluC (126 aa).

Helical transmembrane passes span 6–26 (FVAV…FAVL), 36–56 (YGTL…VGFF), 69–89 (LAIT…SEVV), and 99–119 (WAGL…AFGL). Na(+) contacts are provided by glycine 76 and threonine 79.

Belongs to the fluoride channel Fluc/FEX (TC 1.A.43) family.

Its subcellular location is the cell inner membrane. It catalyses the reaction fluoride(in) = fluoride(out). With respect to regulation, na(+) is not transported, but it plays an essential structural role and its presence is essential for fluoride channel function. Fluoride-specific ion channel. Important for reducing fluoride concentration in the cell, thus reducing its toxicity. The protein is Fluoride-specific ion channel FluC of Cupriavidus necator (strain ATCC 17699 / DSM 428 / KCTC 22496 / NCIMB 10442 / H16 / Stanier 337) (Ralstonia eutropha).